A 122-amino-acid chain; its full sequence is MLVIFLGILGLMASQVLGLPSNQPTGQLRPTEDPPEEELEYWCAYMESCQFCWDCQDGNCINKIDGSVIYKNEFVRPCSVSRWMDKCMYDLNKGIYHTMNCSQPQSWNPYKYFRKEWKKDEL.

Residues 1 to 18 form the signal peptide; it reads MLVIFLGILGLMASQVLG. Residue Asn-100 is glycosylated (N-linked (GlcNAc...) asparagine; by host). Positions 119–122 match the Prevents secretion from ER motif; the sequence is KDEL.

Belongs to the asfivirus MGF 110 family. In terms of processing, N-glycosylated.

The protein resides in the host endoplasmic reticulum lumen. Its function is as follows. Plays a role in virus cell tropism, and may be required for efficient virus replication in macrophages. In Ornithodoros (relapsing fever ticks), this protein is Protein MGF 110-6L.